A 173-amino-acid chain; its full sequence is uncharacterized protein (173 aa).

The helical transmembrane segment at Met1 to Ile21 threads the bilayer.

It to T.pallidum TP0711.

It localises to the membrane. This is an uncharacterized protein from Borreliella burgdorferi (strain ATCC 35210 / DSM 4680 / CIP 102532 / B31) (Borrelia burgdorferi).